The sequence spans 572 residues: Urease subunit alpha (572 aa).

Ni(2+) is bound by residues His-139, His-141, and Lys-222. An N6-carboxylysine modification is found at Lys-222. His-224 contributes to the substrate binding site. Ni(2+)-binding residues include His-251 and His-277. His-325 acts as the Proton donor in catalysis. Asp-365 provides a ligand contact to Ni(2+).

The protein belongs to the metallo-dependent hydrolases superfamily. Urease alpha subunit family. As to quaternary structure, heterotrimer of UreA (gamma), UreB (beta) and UreC (alpha) subunits. Three heterotrimers associate to form the active enzyme. Requires Ni cation as cofactor. Post-translationally, carboxylation allows a single lysine to coordinate two nickel ions.

The protein resides in the cytoplasm. The catalysed reaction is urea + 2 H2O + H(+) = hydrogencarbonate + 2 NH4(+). Its pathway is nitrogen metabolism; urea degradation; CO(2) and NH(3) from urea (urease route): step 1/1. This Acetivibrio thermocellus (strain ATCC 27405 / DSM 1237 / JCM 9322 / NBRC 103400 / NCIMB 10682 / NRRL B-4536 / VPI 7372) (Clostridium thermocellum) protein is Urease subunit alpha.